A 31-amino-acid polypeptide reads, in one-letter code: Nemertide alpha-7 (31 aa).

Disulfide bonds link Cys2–Cys16, Cys9–Cys20, and Cys15–Cys26. A 4-hydroxyproline modification is found at Pro29.

This sequence belongs to the nemertide family. As to expression, confined to the epidermis and to the mucus layer.

It is found in the secreted. Functionally, potent toxin, demonstrating strong inhibitory effects on insect sodium channels (Nav) and reduced activity on mammalian sodium channels. Potently inhibits inactivation of insect sodium channels of B.germanica (BgNav1) (EC(50)=9.5 nM). The toxin also delays the inactivation of most mammalian Nav (human Nav1.1/SCN1A; EC(50)=171.5 nM, rat Nav1.2/SCN2A; EC(50)=50.4 nM, rat Nav1.3/SCN3A; EC(50)=170.2 nM, rat Nav1.4/SCN4A; EC(50)=810.6 nM, human Nav1.5/SCN5A; EC(50)=155.6 nM, mouse Nav1.6/SCN8A; EC(50)=147.6 nM, human Nav1.9/SCN9A; EC(50)=129 nM). Inactivation is completely prevented by a concentration of 1 uM, resulting in sustained, non-inactivating currents. In addition, the toxin significantly enhances the recovery from inactivation, and the open state is not required for the toxin to interact with the channel. In vivo, injection into brine shrimp (Artemia salina) stops movement or causes death after 24 hours (EC(50)=6.1 uM). This Lineus ruber (Red bootlace) protein is Nemertide alpha-7.